Reading from the N-terminus, the 186-residue chain is Ribosome-recycling factor (186 aa).

Belongs to the RRF family.

It is found in the cytoplasm. In terms of biological role, responsible for the release of ribosomes from messenger RNA at the termination of protein biosynthesis. May increase the efficiency of translation by recycling ribosomes from one round of translation to another. This chain is Ribosome-recycling factor, found in Bordetella avium (strain 197N).